Reading from the N-terminus, the 115-residue chain is MKLDISVKYLLKSLIPILIILTVFYLGWKDNQENARMFYAFIGCIISAITFPFSMRIIQKMVIRFTGKEFWQKDFFTNPVGGSLTAIFELFCFVISVPVVAIYLIFILCKALSGK.

The next 3 helical transmembrane spans lie at 7 to 27 (VKYL…FYLG), 38 to 58 (FYAF…MRII), and 87 to 107 (IFEL…LIFI).

The protein localises to the cell membrane. In terms of biological role, this protein is able to protect a cell, which harbors the plasmid IncI1 ColIb-P9 encoding colicin Ib, against colicin Ib. The sequence is that of Colicin-Ib immunity protein from Escherichia coli.